The following is a 437-amino-acid chain: Nicotinate phosphoribosyltransferase (437 aa).

H231 bears the Phosphohistidine; by autocatalysis mark.

This sequence belongs to the NAPRTase family. Transiently phosphorylated on a His residue during the reaction cycle. Phosphorylation strongly increases the affinity for substrates and increases the rate of nicotinate D-ribonucleotide production. Dephosphorylation regenerates the low-affinity form of the enzyme, leading to product release.

It carries out the reaction nicotinate + 5-phospho-alpha-D-ribose 1-diphosphate + ATP + H2O = nicotinate beta-D-ribonucleotide + ADP + phosphate + diphosphate. It functions in the pathway cofactor biosynthesis; NAD(+) biosynthesis; nicotinate D-ribonucleotide from nicotinate: step 1/1. Functionally, catalyzes the synthesis of beta-nicotinate D-ribonucleotide from nicotinate and 5-phospho-D-ribose 1-phosphate at the expense of ATP. This chain is Nicotinate phosphoribosyltransferase, found in Vibrio vulnificus (strain CMCP6).